We begin with the raw amino-acid sequence, 219 residues long: Antigen 5 like allergen Cul n 1 (219 aa).

The first 19 residues, 1–19, serve as a signal peptide directing secretion; that stretch reads MIKKLSIVILFSCISFVLS. 3 disulfides stabilise this stretch: C23–C45, C28–C124, and C55–C117. The region spanning 73 to 211 is the SCP domain; that stretch reads LKVHNRLRNK…RHSGNKYFFW (139 aa).

It belongs to the CRISP family. Expressed in salivary glands.

Its subcellular location is the secreted. The sequence is that of Antigen 5 like allergen Cul n 1 from Culicoides nubeculosus (Biting midge).